Consider the following 568-residue polypeptide: Proline--tRNA ligase (568 aa).

This sequence belongs to the class-II aminoacyl-tRNA synthetase family. ProS type 1 subfamily. In terms of assembly, homodimer.

It localises to the cytoplasm. The catalysed reaction is tRNA(Pro) + L-proline + ATP = L-prolyl-tRNA(Pro) + AMP + diphosphate. Functionally, catalyzes the attachment of proline to tRNA(Pro) in a two-step reaction: proline is first activated by ATP to form Pro-AMP and then transferred to the acceptor end of tRNA(Pro). As ProRS can inadvertently accommodate and process non-cognate amino acids such as alanine and cysteine, to avoid such errors it has two additional distinct editing activities against alanine. One activity is designated as 'pretransfer' editing and involves the tRNA(Pro)-independent hydrolysis of activated Ala-AMP. The other activity is designated 'posttransfer' editing and involves deacylation of mischarged Ala-tRNA(Pro). The misacylated Cys-tRNA(Pro) is not edited by ProRS. The protein is Proline--tRNA ligase of Listeria monocytogenes serotype 4a (strain HCC23).